The following is a 126-amino-acid chain: Fluoride-specific ion channel FluC (126 aa).

4 helical membrane passes run 6–26 (FVAV…FAVL), 36–56 (YGTL…VGFF), 68–88 (LLAV…SSEV), and 99–119 (IGML…MLGL). The Na(+) site is built by G76 and T79.

The protein belongs to the fluoride channel Fluc/FEX (TC 1.A.43) family.

The protein localises to the cell inner membrane. It carries out the reaction fluoride(in) = fluoride(out). With respect to regulation, na(+) is not transported, but it plays an essential structural role and its presence is essential for fluoride channel function. In terms of biological role, fluoride-specific ion channel. Important for reducing fluoride concentration in the cell, thus reducing its toxicity. The polypeptide is Fluoride-specific ion channel FluC (Ralstonia nicotianae (strain ATCC BAA-1114 / GMI1000) (Ralstonia solanacearum)).